A 1416-amino-acid chain; its full sequence is MKDLVKFLKAQSKTSEDFDVIKIGLASPDMIRSWSFGEVKKPETINYRTFKPERDGLFCARIFGPVKDYECLCGKYKRLKHRGVICEKCGVEVTQTKVRRERMGHIELASPVAHIWFLKSLPSRIGLLLDMPLRDIERVLYFEMYIVTEPGMTDLERGQLLTEEQYLDAEDRWQDEFEAKMGAEAIQDLLKGMDLEAECEKLREELQETNSETKRKKITKRLKLLEAFVQSGNKPEWMVMTVLPVLPPDLRPLVPLDGGRFATSDLNDLYRRVINRNNRLKRLLDLIAPDIIVRNEKRMLQESVDALLDNGRRGRAITGSNRRPLKSLADMIKGKQGRFRQNLLGKRVDYSGRSVITVGPYLHLHQCGLPKKMALELFRPFIYAKLESRGYATTIKAAKKMVEREEAIVWDILAEVIREHPILLNRAPTLHRLGIQAFEPILIEGKAIQLHPLVCAAFNADFDGDQMAVHVPLTLEAQLEARALMMSTNNVLSPANGDPIIVPSQDVVLGLYYMTREKVNGKGEGMLLQDPREAEKAYRTGEAELHSRVKVRITEYVKNEAGEFDAKTTLTDTTIGRAILWMIAPKGMPYSLFNQTLGKKAISKLINEAYRRLGLKEAVMFADQIMYTGFAYAARSGSSVGIDDMEIPAKKYEIISAAEEEVAEIQEQFQSGLVTAGERYNKVIDIWAAANERVAKAMMENLSQEEVINREGNPEKQASFNSIFMMADSGARGSAAQIRQLAGMRGLMARPDGSIIETPITANFREGLNVLQYFISTHGARKGLADTALKTANSGYLTRRLVDVAQDLVIVEDDCGTHEGLVMTPLIEGGDEKVPLRELVLGRVAAEDILKPGTEEVLIPRNTLLDEKLCDVLDANSVDSVKVRSVVTCDTDFGVCAKCYGRDLARGHLINQGEAVGVIAAQSIGEPGTQLTMRTFHIGGAASAAAKESSVQVKNTGTVHLMNAKFVTNDESKLVLTSRNTELTITDAFGRTKEHYKVPYGAVLSKGDGQEVTAGETIANWDPHTMPVVSEVSGFVKFVDIIDGLTVTRQTDELTGLSSIVVQDVGERATAGKDLRPTIKLVDANGNDIFLPETDVLAQYFLPGKAIVSLDDGAAVKVGEPLARIPQESVGTKDITGGLPRVADLFEARKPKEPAILAEISGIVSFGKETKGKRRLLITPTEGETYEEMIPKWRQLNVFEGEMVQRGDVISDGAETPHDILRLRGVRAVTEYIVNEVQDVYRLQGVKINDKHIEVIVRQMLRKAVITKAYDSEFLEGEQVEVARVKIVNRQREAEGKPPVEFERELLGITKASLATESFISAASFQETTRVLTEAAVAGKRDELRGLKENVIVGRLIPAGTGFAYHQNRHKHRLVDDVVAKLSEEDEATIADEFVMTADDASASLAEMLNMADDAE.

The Zn(2+) site is built by Cys-71, Cys-73, Cys-86, and Cys-89. The Mg(2+) site is built by Asp-461, Asp-463, and Asp-465. 4 residues coordinate Zn(2+): Cys-815, Cys-889, Cys-896, and Cys-899.

Belongs to the RNA polymerase beta' chain family. As to quaternary structure, the RNAP catalytic core consists of 2 alpha, 1 beta, 1 beta' and 1 omega subunit. When a sigma factor is associated with the core the holoenzyme is formed, which can initiate transcription. Requires Mg(2+) as cofactor. The cofactor is Zn(2+).

The enzyme catalyses RNA(n) + a ribonucleoside 5'-triphosphate = RNA(n+1) + diphosphate. In terms of biological role, DNA-dependent RNA polymerase catalyzes the transcription of DNA into RNA using the four ribonucleoside triphosphates as substrates. This chain is DNA-directed RNA polymerase subunit beta', found in Haemophilus influenzae (strain PittEE).